A 209-amino-acid chain; its full sequence is Outer-membrane lipoprotein carrier protein (209 aa).

Residues 1-23 form the signal peptide; sequence MKNLLKKSLLGLAFLSLNGFAFA.

Belongs to the LolA family. As to quaternary structure, monomer.

It is found in the periplasm. Participates in the translocation of lipoproteins from the inner membrane to the outer membrane. Only forms a complex with a lipoprotein if the residue after the N-terminal Cys is not an aspartate (The Asp acts as a targeting signal to indicate that the lipoprotein should stay in the inner membrane). This chain is Outer-membrane lipoprotein carrier protein, found in Glaesserella parasuis serovar 5 (strain SH0165) (Haemophilus parasuis).